The sequence spans 1036 residues: Phospholipase D1 (1036 aa).

A PX domain is found at 81–212 (IKAQVLEVER…TEFLDVSQLS (132 aa)). A PH domain is found at 219–328 (PKGLEGMIMK…WGGAIEEFIQ (110 aa)). Residues Cys-240 and Cys-241 are each lipidated (S-palmitoyl cysteine). The PLD phosphodiesterase 1 domain occupies 459-486 (YLWAHHEKLVIIDQSVAFVGGIDLAYGR). The interval 463 to 890 (HHEKLVIIDQ…MLGKRDSEMA (428 aa)) is catalytic. Phosphoserine occurs at positions 499, 561, and 591. Residues 853–880 (ELIYVHSKLLIADDNTVIIGSANINDRS) form the PLD phosphodiesterase 2 domain.

It belongs to the phospholipase D family. In terms of assembly, interacts with PIP5K1B.

The protein resides in the cytoplasm. It localises to the perinuclear region. The protein localises to the endoplasmic reticulum membrane. It is found in the golgi apparatus membrane. Its subcellular location is the late endosome membrane. It catalyses the reaction a 1,2-diacyl-sn-glycero-3-phosphocholine + H2O = a 1,2-diacyl-sn-glycero-3-phosphate + choline + H(+). Its activity is regulated as follows. Stimulated by phosphatidylinositol 4,5-bisphosphate and phosphatidylinositol 3,4,5-trisphosphate, activated by the phosphokinase C-alpha, by the ADP-ribosylation factor-1 (ARF-1), and to a lesser extent by GTP-binding proteins: RHO A, RAC-1 and CDC42. Functionally, implicated as a critical step in numerous cellular pathways, including signal transduction, membrane trafficking, and the regulation of mitosis. May be involved in the regulation of perinuclear intravesicular membrane traffic. The polypeptide is Phospholipase D1 (PLD1) (Cricetulus griseus (Chinese hamster)).